The sequence spans 560 residues: Muellerian-inhibiting factor (560 aa).

Residues 1–24 (MRDLPLTSLALVLSALGALLGTEA) form the signal peptide. The propeptide occupies 25 to 451 (LRAEEPAVGT…DPRGPGRAQR (427 aa)). N-linked (GlcNAc...) asparagine glycosylation occurs at Asn64. The interval 259-287 (PLPAHGQLDTVPFPPPRPSAELEESPPSA) is disordered. N-linked (GlcNAc...) asparagine glycosylation occurs at Asn329. Cystine bridges form between Cys462/Cys526, Cys488/Cys557, and Cys492/Cys559.

This sequence belongs to the TGF-beta family. As to quaternary structure, homodimer; disulfide-linked. Preproprotein is proteolytically processed to generate N- and C-terminal cleavage products that homodimerize and associate to form a biologically active non-covalent complex. Binding of the non-covalent complex to AMHR2 induces dissociation of the pro-region from the mature C-terminal dimer. The N-terminal portion of the protein, despite having no intrinsic activity, has the role of amplifying the activity of the C-terminus. As to expression, in ovaries, AMH is detected in granulosa cells of early growing follicles.

Its subcellular location is the secreted. Its function is as follows. Plays an important role in several reproductive functions. Induces Muellerian duct regression during male fetal sexual differentiation. Also plays a role in Leydig cell differentiation and function. In female acts as a negative regulator of the primordial to primary follicle transition and decreases FSH sensitivity of growing follicles. AMH signals by binding to a specific type-II receptor, AMHR2, that heterodimerizes with type-I receptors (ACVR1 and BMPR1A), and recruiting SMAD proteins that are translocated to the nucleus to regulate target gene expression. The protein is Muellerian-inhibiting factor of Homo sapiens (Human).